A 552-amino-acid chain; its full sequence is CTP synthase (552 aa).

Residues 1–265 are amidoligase domain; sequence MTKFVFVTGG…DRIVCEKLAL (265 aa). Residue Ser13 participates in CTP binding. Ser13 serves as a coordination point for UTP. ATP contacts are provided by residues 14 to 19 and Asp71; that span reads SLGKGI. Residues Asp71 and Glu139 each coordinate Mg(2+). Residues 146–148, 186–191, and Lys222 each bind CTP; these read DIE and KTKPTQ. UTP is bound by residues 186 to 191 and Lys222; that span reads KTKPTQ. One can recognise a Glutamine amidotransferase type-1 domain in the interval 290-545; sequence TIGMVGKYVD…IKAALAHKQA (256 aa). Gly351 provides a ligand contact to L-glutamine. The Nucleophile; for glutamine hydrolysis role is filled by Cys378. L-glutamine-binding positions include 379-382, Glu402, and Arg468; that span reads LGMQ. Residues His518 and Glu520 contribute to the active site.

It belongs to the CTP synthase family. In terms of assembly, homotetramer.

It catalyses the reaction UTP + L-glutamine + ATP + H2O = CTP + L-glutamate + ADP + phosphate + 2 H(+). The enzyme catalyses L-glutamine + H2O = L-glutamate + NH4(+). The catalysed reaction is UTP + NH4(+) + ATP = CTP + ADP + phosphate + 2 H(+). It participates in pyrimidine metabolism; CTP biosynthesis via de novo pathway; CTP from UDP: step 2/2. Its activity is regulated as follows. Allosterically activated by GTP, when glutamine is the substrate; GTP has no effect on the reaction when ammonia is the substrate. The allosteric effector GTP functions by stabilizing the protein conformation that binds the tetrahedral intermediate(s) formed during glutamine hydrolysis. Inhibited by the product CTP, via allosteric rather than competitive inhibition. Catalyzes the ATP-dependent amination of UTP to CTP with either L-glutamine or ammonia as the source of nitrogen. Regulates intracellular CTP levels through interactions with the four ribonucleotide triphosphates. In Herminiimonas arsenicoxydans, this protein is CTP synthase.